The primary structure comprises 172 residues: R-phycocyanin-2 beta chain (172 aa).

At Asn72 the chain carries N4-methylasparagine. Cys82 contributes to the (2R,3E)-phycocyanobilin binding site. Cys153 contributes to the (2R,3E)-phycoerythrobilin binding site.

The protein belongs to the phycobiliprotein family. As to quaternary structure, heterodimer of an alpha and a beta chain. In terms of processing, contains two covalently linked bilin chromophores.

The protein localises to the cellular thylakoid membrane. In terms of biological role, light-harvesting photosynthetic bile pigment-protein from the phycobiliprotein complex. This chain is R-phycocyanin-2 beta chain (rpcB), found in Synechococcus sp. (strain WH8103).